A 397-amino-acid chain; its full sequence is Elongation factor Tu (397 aa).

Residues 10–206 (KPHVNIGTIG…AVDESIPEPQ (197 aa)) enclose the tr-type G domain. A G1 region spans residues 19-26 (GHIDHGKT). 19-26 (GHIDHGKT) contributes to the GTP binding site. Thr-26 contacts Mg(2+). The G2 stretch occupies residues 62-66 (GITIS). A G3 region spans residues 83-86 (DCPG). GTP-binding positions include 83–87 (DCPGH) and 138–141 (NKAD). The tract at residues 138-141 (NKAD) is G4. The segment at 176 to 178 (SAL) is G5.

Belongs to the TRAFAC class translation factor GTPase superfamily. Classic translation factor GTPase family. EF-Tu/EF-1A subfamily. In terms of assembly, monomer.

The protein localises to the cytoplasm. It carries out the reaction GTP + H2O = GDP + phosphate + H(+). GTP hydrolase that promotes the GTP-dependent binding of aminoacyl-tRNA to the A-site of ribosomes during protein biosynthesis. This chain is Elongation factor Tu, found in Frankia casuarinae (strain DSM 45818 / CECT 9043 / HFP020203 / CcI3).